Reading from the N-terminus, the 320-residue chain is Beta-carotene ketolase (320 aa).

It carries out the reaction all-trans-beta-carotene + 2 AH2 + 2 O2 = echinenone + 2 A + 3 H2O. The enzyme catalyses echinenone + 2 AH2 + 2 O2 = canthaxanthin + 2 A + 3 H2O. It functions in the pathway carotenoid biosynthesis; astaxanthin biosynthesis. Functionally, converts beta-carotene to canthaxanthin via echinenone. This chain is Beta-carotene ketolase, found in Haematococcus lacustris (Green alga).